The chain runs to 292 residues: Homoserine kinase (292 aa).

Pro-84 to Ala-94 contributes to the ATP binding site.

Belongs to the GHMP kinase family. Homoserine kinase subfamily.

It is found in the cytoplasm. It carries out the reaction L-homoserine + ATP = O-phospho-L-homoserine + ADP + H(+). It functions in the pathway amino-acid biosynthesis; L-threonine biosynthesis; L-threonine from L-aspartate: step 4/5. In terms of biological role, catalyzes the ATP-dependent phosphorylation of L-homoserine to L-homoserine phosphate. The chain is Homoserine kinase from Campylobacter lari (strain RM2100 / D67 / ATCC BAA-1060).